Here is a 186-residue protein sequence, read N- to C-terminus: Probable peptidoglycan L,D-endopeptidase MepK (186 aa).

The first 30 residues, 1–30 (MNYVDQNKRKWLSLGGIALGISILPNSVLA), serve as a signal peptide directing secretion. Residues histidine 134, aspartate 141, and histidine 174 each contribute to the Zn(2+) site.

Belongs to the peptidase M15 family. Zn(2+) is required as a cofactor.

It functions in the pathway cell wall biogenesis; cell wall polysaccharide biosynthesis. Functionally, l,D-endopeptidase that cleaves meso-diaminopimelic acid (mDAP)-mDAP cross-links in peptidoglycan. It works in conjunction with other elongation-specific D,D-endopeptidases to make space for efficient incorporation of nascent peptidoglycan strands into the sacculus and thus enable cell wall expansion. This is Probable peptidoglycan L,D-endopeptidase MepK from Haemophilus influenzae (strain ATCC 51907 / DSM 11121 / KW20 / Rd).